The primary structure comprises 596 residues: ATP-dependent lipid A-core flippase (596 aa).

Transmembrane regions (helical) follow at residues 34–54 (VWVL…EAGI), 80–100 (AAVV…GYLL), 138–158 (AVVF…ITLV), 164–184 (VVFL…IVAI), 263–283 (QPLT…IAVV), and 292–312 (VGGF…LKHL). Residues 38–321 (VAGVLAMAAV…LMDVNQPLQR (284 aa)) form the ABC transmembrane type-1 domain. Residues 353–589 (IEFSHVSFSY…GGLYAHLHRI (237 aa)) enclose the ABC transporter domain. ATP is bound at residue 389–396 (GPSGSGKT).

Belongs to the ABC transporter superfamily. Lipid exporter (TC 3.A.1.106) family. As to quaternary structure, homodimer.

The protein resides in the cell inner membrane. It catalyses the reaction ATP + H2O + lipid A-core oligosaccharideSide 1 = ADP + phosphate + lipid A-core oligosaccharideSide 2.. In terms of biological role, involved in lipopolysaccharide (LPS) biosynthesis. Translocates lipid A-core from the inner to the outer leaflet of the inner membrane. Transmembrane domains (TMD) form a pore in the inner membrane and the ATP-binding domain (NBD) is responsible for energy generation. The protein is ATP-dependent lipid A-core flippase of Burkholderia mallei (strain ATCC 23344).